We begin with the raw amino-acid sequence, 474 residues long: Coiled-coil domain-containing protein 6 (474 aa).

Over residues 1–10 the composition is skewed to acidic residues; sequence MADSASESDT. The segment at 1 to 47 is disordered; sequence MADSASESDTDGAGGNSSSSAAMQSSCSSTSGGGGGGGGGGGGGKSG. At Ala2 the chain carries N-acetylalanine. The span at 16–30 shows a compositional bias: low complexity; it reads NSSSSAAMQSSCSST. Residues 31 to 47 show a composition bias toward gly residues; the sequence is SGGGGGGGGGGGGGKSG. Ser52 is subject to Phosphoserine. Residues 53-237 adopt a coiled-coil conformation; the sequence is PFRLEELTNR…KRILQEKLDQ (185 aa). Repeat copies occupy residues 106-134, 135-163, and 164-192. Positions 106-235 are 5 X 29 AA tandem repeats; the sequence is EQEEEFISNT…AEKRILQEKL (130 aa). The stretch at 193 to 206 is one 4; approximate repeat; sequence EQLRREKIDLENTL. The stretch at 207–235 is repeat 5; sequence EQEQEALVNRLWKRMDKLEAEKRILQEKL. Residues Ser240, Ser244, Ser249, Ser254, Ser284, and Ser323 each carry the phosphoserine modification. Positions 253–332 form a coiled coil; that stretch reads DSPENMMRHI…SESESSLEMD (80 aa). The interval 342–369 is disordered; it reads AQGLRPRTVSSPIPYTPSPSSSRPISPG. Residue Thr349 is modified to Phosphothreonine. Low complexity predominate over residues 351 to 368; it reads SSPIPYTPSPSSSRPISP. Phosphoserine is present on residues Ser363 and Ser367. Arg387 bears the Omega-N-methylarginine mark. Phosphoserine is present on residues Ser395 and Ser413. Positions 397–474 are disordered; sequence GLHVQHMGTS…QHSAHPSSQP (78 aa). A compositionally biased stretch (pro residues) spans 426–451; sequence PTPPPSPNTQTPVQPPPPPPPPPMQP. An SH3-binding motif is present at residues 442–451; sequence PPPPPPPMQP. Over residues 459–474 the composition is skewed to low complexity; the sequence is SQPTPSQHSAHPSSQP.

As to expression, ubiquitously expressed.

The protein localises to the cytoplasm. The protein resides in the cytoskeleton. This Homo sapiens (Human) protein is Coiled-coil domain-containing protein 6 (CCDC6).